A 221-amino-acid polypeptide reads, in one-letter code: Probable septum site-determining protein MinC (221 aa).

The protein belongs to the MinC family. As to quaternary structure, interacts with MinD and FtsZ.

Functionally, cell division inhibitor that blocks the formation of polar Z ring septums. Rapidly oscillates between the poles of the cell to destabilize FtsZ filaments that have formed before they mature into polar Z rings. Prevents FtsZ polymerization. The polypeptide is Probable septum site-determining protein MinC (Shewanella sp. (strain ANA-3)).